The primary structure comprises 510 residues: MTDAVQNETVQEASAQEENKLIAERRAKLDAIRKSCKANGHPNDFRRDALAGDLQKEFGEKTKEELEELNHVVAIAGRIMAKRGPFLVIQETSGRIQAYADKAVQKVLKEKYQGLDIGDIIGVKGALHKSGKGDLYVNMEEFELLTKALRPLPEKFHGLTDQEMRYRQRYVDLIVNEDSRQAFVVRSKVMSAIRNFMITKQFMEVETPMMHVIPGGASARPFITHHNALDMPMYLRIAPELYLKRLVVGGFDRVFEINRNFRNEGLSPRHNPEFTMMEFYMAYADYKELMDLTEELLSSVALEVLGSTSMPYGDDTVEFGGTYTRMSMFEAIKHYNPDHAQIQALTEEDIQNRDLMVSIAKSVHVEVESFWTCGQLLEEIFGETAEPKLMQPTFITGYPADISPLARRSDDNPFFTDRFEFFIGGREVANGFSELNDAEDQDARFKAQVEAKESGDDEAMFYDADYITALEHGLPPTAGQGIGIDRLVMLLTNTHTIRDVILFPAMRPQA.

2 residues coordinate Mg(2+): Glu420 and Glu427.

It belongs to the class-II aminoacyl-tRNA synthetase family. Homodimer. Requires Mg(2+) as cofactor.

The protein localises to the cytoplasm. It carries out the reaction tRNA(Lys) + L-lysine + ATP = L-lysyl-tRNA(Lys) + AMP + diphosphate. This Vibrio campbellii (strain ATCC BAA-1116) protein is Lysine--tRNA ligase.